We begin with the raw amino-acid sequence, 409 residues long: Arginine deiminase (409 aa).

The active-site Amidino-cysteine intermediate is the Cys399.

It belongs to the arginine deiminase family.

The protein resides in the cytoplasm. The enzyme catalyses L-arginine + H2O = L-citrulline + NH4(+). The protein operates within amino-acid degradation; L-arginine degradation via ADI pathway; carbamoyl phosphate from L-arginine: step 1/2. This is Arginine deiminase (arcA) from Latilactobacillus sakei (Lactobacillus sakei).